The primary structure comprises 823 residues: MEKICVAVRVRPPAPENGASLWKVEDNRISLHKSLDTPITTASHAFDHVFDESSTNASVYELLTKDIIHAAVEGFNGTAFAYGQTSSGKTFTMTGSETDPGIIRRSVRDVFERIHMISDREFLIRVSYMEIYNEEINDLLAVENQRLQIHEHLERGVFVAGLKEEIVSDAEQILKLIDSGEVNRHFGETNMNVHSSRSHTIFRMVIESRGKDNSSSDAIRVSVLNLVDLAGSERIAKTGAGGVRLQEGKYINKSLMILGNVINKLSDSTKLRAHIPYRDSKLTRILQPALGGNAKTCIICTIAPEEHHIEESKGTLQFASRAKRITNCAQVNEILTDAALLKRQKLEIEELRMKLQGSHAEVLEQEILNLSNQMLKYELECERLKTQLEEEKRKQKEQENCIKEQQMKIENLNNFVTNSDFKRNQSEDFIISRKTPDGLCNVNDTSDVPGTPCFKSASRSFVVARSNNYSGLSDFSPMVHSLGDVADEDTWMKLNKGFVADLDQIQFTPAVKCQPTPLSIATTECPRENHSEVEDLKSRIQLLTNENDSLQVKFNEQVLLSNNLMQEMSELKQETLTVKEIPNRLSESVANCKDVYKDVIVTMKSLITDKESPTANLLLGTTEITTSLLATLETQFSMIMDGQKTGSSIDHPLSDHWETLRVNLKNTTTLLLSDAQAKDEFLNSHNKGQETAALEEKKLKSELIIIKERYNELEKELCLDKQLLEASRESHEKLIKEVQFLKEERDSLDRKISQSTQRLRVIASDKENALKDLNVEVKRRKDMEEEIKHISIAFATRHKSFVSFHSEIKSKMQKLTTQNSKAP.

The 323-residue stretch at 3–325 folds into the Kinesin motor domain; sequence KICVAVRVRP…LQFASRAKRI (323 aa). 83–90 is an ATP binding site; sequence GQTSSGKT. 3 coiled-coil regions span residues 341–414, 527–557, and 696–786; these read LKRQ…NLNN, RENH…FNEQ, and EKKL…MEEE.

This sequence belongs to the TRAFAC class myosin-kinesin ATPase superfamily. Kinesin family. KIN-7 subfamily.

The sequence is that of Kinesin-like protein KIN-7N from Arabidopsis thaliana (Mouse-ear cress).